A 189-amino-acid polypeptide reads, in one-letter code: Peptidyl-tRNA hydrolase (189 aa).

Y15 serves as a coordination point for tRNA. H20 serves as the catalytic Proton acceptor. Positions 67, 69, and 115 each coordinate tRNA.

The protein belongs to the PTH family. As to quaternary structure, monomer.

It localises to the cytoplasm. The enzyme catalyses an N-acyl-L-alpha-aminoacyl-tRNA + H2O = an N-acyl-L-amino acid + a tRNA + H(+). Functionally, hydrolyzes ribosome-free peptidyl-tRNAs (with 1 or more amino acids incorporated), which drop off the ribosome during protein synthesis, or as a result of ribosome stalling. Catalyzes the release of premature peptidyl moieties from peptidyl-tRNA molecules trapped in stalled 50S ribosomal subunits, and thus maintains levels of free tRNAs and 50S ribosomes. The sequence is that of Peptidyl-tRNA hydrolase from Symbiobacterium thermophilum (strain DSM 24528 / JCM 14929 / IAM 14863 / T).